Here is a 218-residue protein sequence, read N- to C-terminus: Probable transaldolase (218 aa).

Lysine 83 (schiff-base intermediate with substrate) is an active-site residue.

This sequence belongs to the transaldolase family. Type 3B subfamily.

Its subcellular location is the cytoplasm. It catalyses the reaction D-sedoheptulose 7-phosphate + D-glyceraldehyde 3-phosphate = D-erythrose 4-phosphate + beta-D-fructose 6-phosphate. Its pathway is carbohydrate degradation; pentose phosphate pathway; D-glyceraldehyde 3-phosphate and beta-D-fructose 6-phosphate from D-ribose 5-phosphate and D-xylulose 5-phosphate (non-oxidative stage): step 2/3. Functionally, transaldolase is important for the balance of metabolites in the pentose-phosphate pathway. This chain is Probable transaldolase, found in Thermotoga sp. (strain RQ2).